A 236-amino-acid chain; its full sequence is Pyridoxine 5'-phosphate synthase (236 aa).

Asn6 is a 3-amino-2-oxopropyl phosphate binding site. 8–9 contributes to the 1-deoxy-D-xylulose 5-phosphate binding site; that stretch reads DH. Arg17 contributes to the 3-amino-2-oxopropyl phosphate binding site. The Proton acceptor role is filled by His42. Arg44 and His49 together coordinate 1-deoxy-D-xylulose 5-phosphate. Glu69 serves as the catalytic Proton acceptor. Position 99 (Thr99) interacts with 1-deoxy-D-xylulose 5-phosphate. His190 functions as the Proton donor in the catalytic mechanism. Residues Gly191 and 212 to 213 each bind 3-amino-2-oxopropyl phosphate; that span reads GH.

The protein belongs to the PNP synthase family. In terms of assembly, homooctamer; tetramer of dimers.

It is found in the cytoplasm. It carries out the reaction 3-amino-2-oxopropyl phosphate + 1-deoxy-D-xylulose 5-phosphate = pyridoxine 5'-phosphate + phosphate + 2 H2O + H(+). Its pathway is cofactor biosynthesis; pyridoxine 5'-phosphate biosynthesis; pyridoxine 5'-phosphate from D-erythrose 4-phosphate: step 5/5. Its function is as follows. Catalyzes the complicated ring closure reaction between the two acyclic compounds 1-deoxy-D-xylulose-5-phosphate (DXP) and 3-amino-2-oxopropyl phosphate (1-amino-acetone-3-phosphate or AAP) to form pyridoxine 5'-phosphate (PNP) and inorganic phosphate. The sequence is that of Pyridoxine 5'-phosphate synthase from Prosthecochloris aestuarii (strain DSM 271 / SK 413).